We begin with the raw amino-acid sequence, 138 residues long: Beta-galactosidase (138 aa).

Belongs to the glycosyl hydrolase 2 family.

It carries out the reaction Hydrolysis of terminal non-reducing beta-D-galactose residues in beta-D-galactosides.. The chain is Beta-galactosidase (lacZ) from Rhizobium radiobacter (Agrobacterium tumefaciens).